A 321-amino-acid chain; its full sequence is Aspartate carbamoyltransferase catalytic subunit (321 aa).

Carbamoyl phosphate-binding residues include R65 and T66. K93 is an L-aspartate binding site. Positions 115, 143, and 146 each coordinate carbamoyl phosphate. R176 and R230 together coordinate L-aspartate. G271 and P272 together coordinate carbamoyl phosphate.

Belongs to the aspartate/ornithine carbamoyltransferase superfamily. ATCase family. As to quaternary structure, heterododecamer (2C3:3R2) of six catalytic PyrB chains organized as two trimers (C3), and six regulatory PyrI chains organized as three dimers (R2).

It catalyses the reaction carbamoyl phosphate + L-aspartate = N-carbamoyl-L-aspartate + phosphate + H(+). The protein operates within pyrimidine metabolism; UMP biosynthesis via de novo pathway; (S)-dihydroorotate from bicarbonate: step 2/3. In terms of biological role, catalyzes the condensation of carbamoyl phosphate and aspartate to form carbamoyl aspartate and inorganic phosphate, the committed step in the de novo pyrimidine nucleotide biosynthesis pathway. The chain is Aspartate carbamoyltransferase catalytic subunit from Bartonella tribocorum (strain CIP 105476 / IBS 506).